A 1019-amino-acid polypeptide reads, in one-letter code: Collagen alpha-1(VI) chain (1019 aa).

Residues 1–19 (MGLHDSFLALLLLLGGAWA) form the signal peptide. Residues 37-233 (DLFFVLDTSE…LDVEETINNI (197 aa)) form the VWFA 1 domain. Asn212 carries an N-linked (GlcNAc...) asparagine glycan. The tract at residues 248–588 (FECHPPRGPP…GPPGPVGPPG (341 aa)) is disordered. Over residues 253–262 (PRGPPGPPGD) the composition is skewed to pro residues. 2 stretches are compositionally biased toward basic and acidic residues: residues 299–332 (KGDK…DGMK) and 370–380 (GKGEPGEDGKP). Over residues 427–436 (ERGPPGSPGD) the composition is skewed to low complexity. The Cell attachment site signature appears at 476-478 (RGD). An N-linked (GlcNAc...) asparagine glycan is attached at Asn514. Positions 529–531 (RGD) match the Cell attachment site motif. N-linked (GlcNAc...) asparagine glycosylation occurs at Asn535. A compositionally biased stretch (pro residues) spans 577 to 588 (RPGPPGPVGPPG). VWFA domains follow at residues 613 to 800 (DLLF…LQNI) and 824 to 1012 (DIML…YQTV). 2 N-linked (GlcNAc...) asparagine glycosylation sites follow: Asn799 and Asn887.

Belongs to the type VI collagen family. Trimers composed of three different chains: alpha 1(VI), alpha 2(VI), and alpha 3(VI). Prolines at the third position of the tripeptide repeating unit (G-X-Y) are hydroxylated in some or all of the chains.

It localises to the secreted. Its subcellular location is the extracellular space. The protein resides in the extracellular matrix. Its function is as follows. Collagen VI acts as a cell-binding protein. The chain is Collagen alpha-1(VI) chain (COL6A1) from Gallus gallus (Chicken).